The sequence spans 632 residues: Galactan 5-O-arabinofuranosyltransferase (632 aa).

13 consecutive transmembrane segments (helical) span residues 10 to 30 (QIVL…IAIA), 45 to 65 (ALTT…GGVW), 76 to 96 (LGGL…PLGA), 162 to 182 (WAIT…WQMI), 184 to 204 (FEYA…YSSP), 206 to 226 (PYAA…WSGL), 242 to 259 (GWAT…AATW), 263 to 282 (LLAY…ATAL), 298 to 318 (LAGI…PFLA), 344 to 364 (FPML…LWLI), 375 to 395 (ALMI…LTTL), 409 to 429 (LTVL…QSLA), and 434 to 454 (AVLS…SQDI). Topologically, residues 455–632 (PNVLRPDLTI…LAIRKPMGNA (178 aa)) are extracellular.

Belongs to the glycosyltransferase 85 family.

The protein localises to the cell membrane. It catalyses the reaction Adds an alpha-D-arabinofuranosyl group from trans,octacis-decaprenylphospho-beta-D-arabinofuranose at the 5-O-position of the eighth, tenth and twelfth galactofuranose unit of the galactofuranan chain of [beta-D-galactofuranosyl-(1-&gt;5)-beta-D-galactofuranosyl-(1-&gt;6)]14-beta-D-galactofuranosyl-(1-&gt;5)-beta-D-galactofuranosyl-(1-&gt;4)-alpha-L-rhamnopyranosyl-(1-&gt;3)-N-acetyl-alpha-D-glucosaminyl-diphospho-trans,octacis-decaprenol.. It functions in the pathway cell wall biogenesis; cell wall polysaccharide biosynthesis. Its function is as follows. Involved in the biosynthesis of the arabinogalactan (AG) region of the mycolylarabinogalactan-peptidoglycan (mAGP) complex, an essential component of the mycobacterial cell wall. Catalyzes the addition of the first key arabinofuranosyl (Araf) residue from the sugar donor decaprenyl-phospho-arabinose (DPA) on the C-5 of a 6-linked galactofuranosyl (Galf) of the galactan domain, thus 'priming' the galactan for further elaboration by other arabinofuranosyltransferases. The sequence is that of Galactan 5-O-arabinofuranosyltransferase from Mycobacterium leprae (strain TN).